The sequence spans 136 residues: Small ribosomal subunit protein uS19 (136 aa).

The protein belongs to the universal ribosomal protein uS19 family.

Protein S19 forms a complex with S13 that binds strongly to the 16S ribosomal RNA. The chain is Small ribosomal subunit protein uS19 from Methanosarcina mazei (strain ATCC BAA-159 / DSM 3647 / Goe1 / Go1 / JCM 11833 / OCM 88) (Methanosarcina frisia).